Here is a 954-residue protein sequence, read N- to C-terminus: SWI/SNF-related matrix-associated actin-dependent regulator of chromatin subfamily A-like protein 1 (954 aa).

2 disordered regions span residues 1–20 (MSLPLTEEQRKKIEENRQKA) and 27–238 (KLLA…NSQK). Residue S2 is modified to N-acetylserine. Residues 3-34 (LPLTEEQRKKIEENRQKALARRAEKLLAEQHQ) are a coiled coil. The interval 5–30 (LTEEQRKKIEENRQKALARRAEKLLA) is mediates interaction with RPA2. Basic and acidic residues predominate over residues 7–20 (EEQRKKIEENRQKA). The span at 72–83 (KQQNLSSSSNAD) shows a compositional bias: polar residues. 4 positions are modified to phosphoserine: S112, S123, S129, and S151. 2 stretches are compositionally biased toward polar residues: residues 171-183 (KSSQETPAHSSGQ) and 197-238 (ASPS…NSQK). The residue at position 198 (S198) is a Phosphoserine. 2 consecutive HARP domains span residues 226–303 (SGSS…QPLE) and 327–398 (SLSF…DPLP). The 156-residue stretch at 445 to 600 (NFAIAKGGRL…YTQIIAVKPT (156 aa)) folds into the Helicase ATP-binding domain. 458-465 (DDMGLGKT) provides a ligand contact to ATP. The DESH box motif lies at 549 to 552 (DESH). The short motif at 644–661 (RRLKSDVLSQLPAKQRKI) is the Nuclear localization signal element. A Helicase C-terminal domain is found at 716–869 (YILDLLESGR…ETNFSEMTES (154 aa)). The segment at 904–934 (ESFDPGSASGTSGSSSQNMGDTLDESSLTAS) is disordered. Low complexity predominate over residues 909–919 (GSASGTSGSSS). Over residues 920-934 (QNMGDTLDESSLTAS) the composition is skewed to polar residues.

Belongs to the SNF2/RAD54 helicase family. SMARCAL1 subfamily. In terms of assembly, interacts with RPA2; the interaction is direct and mediates the recruitment by the RPA complex of SMARCAL1 to sites of DNA damage. Post-translationally, DNA damage-regulated phosphorylation by kinases that may include ATM, ATR and PRKDC. In terms of tissue distribution, ubiquitously expressed, with high levels in testis.

The protein resides in the nucleus. It carries out the reaction ATP + H2O = ADP + phosphate + H(+). In terms of biological role, ATP-dependent annealing helicase that binds selectively to fork DNA relative to ssDNA or dsDNA and catalyzes the rewinding of the stably unwound DNA. Rewinds single-stranded DNA bubbles that are stably bound by replication protein A (RPA). Acts throughout the genome to reanneal stably unwound DNA, performing the opposite reaction of many enzymes, such as helicases and polymerases, that unwind DNA. May play an important role in DNA damage response by acting at stalled replication forks. This chain is SWI/SNF-related matrix-associated actin-dependent regulator of chromatin subfamily A-like protein 1, found in Homo sapiens (Human).